We begin with the raw amino-acid sequence, 145 residues long: NADH dehydrogenase [ubiquinone] 1 alpha subcomplex subunit 12 (145 aa).

Met-1 is subject to N-acetylmethionine.

It belongs to the complex I NDUFA12 subunit family. In terms of assembly, complex I is composed of 45 different subunits.

It is found in the mitochondrion inner membrane. Accessory subunit of the mitochondrial membrane respiratory chain NADH dehydrogenase (Complex I), that is believed not to be involved in catalysis. Complex I functions in the transfer of electrons from NADH to the respiratory chain. The immediate electron acceptor for the enzyme is believed to be ubiquinone. This Mus musculus (Mouse) protein is NADH dehydrogenase [ubiquinone] 1 alpha subcomplex subunit 12 (Ndufa12).